The chain runs to 291 residues: Venom metalloproteinase inhibitor DM43 (291 aa).

2 Ig-like V-type domains span residues 22–79 (TNVT…ILTS) and 114–171 (GLET…PASA). N23 carries N-linked (GlcNAc...) asparagine glycosylation. 2 disulfide bridges follow: C28–C74 and C121–C163. N-linked (GlcNAc...) asparagine glycosylation is found at N156, N160, and N175. Residues 191 to 288 (PKANFYILND…DSNVLELDLS (98 aa)) enclose the Ig-like V-type 3 domain. The cysteines at positions 213 and 265 are disulfide-linked.

As to quaternary structure, homodimer. Post-translationally, N-glycosylated. Blood and milk.

In terms of biological role, metalloproteinase inhibitor. The sequence is that of Venom metalloproteinase inhibitor DM43 from Didelphis marsupialis (Southern opossum).